The chain runs to 916 residues: Cadherin-4 (916 aa).

Residues 1 to 20 (MTAGAGVLLLLLSLSGALRA) form the signal peptide. Positions 21–169 (HNEDLTTRET…NANGLRRRKR (149 aa)) are excised as a propeptide. Residues 124–168 (TSSPHSGHKPQKGKKVVALDPSPPPKDTLLPWPQHQNANGLRRRK) form a disordered region. Over residues 129-138 (SGHKPQKGKK) the composition is skewed to basic residues. 5 Cadherin domains span residues 170–277 (DWVI…RPEF), 278–392 (INQV…PPEF), 393–507 (TAST…APYF), 508–613 (PSNH…DNAP), and 614–724 (ELLP…TIGA). Residues 170-734 (DWVIPPINVP…VAAAGLGTGA (565 aa)) lie on the Extracellular side of the membrane. 6 N-linked (GlcNAc...) asparagine glycosylation sites follow: Asn-283, Asn-412, Asn-557, Asn-632, Asn-661, and Asn-702. The helical transmembrane segment at 735–756 (IVAILICILILLTMVLLFVMWM) threads the bilayer. Residues 757 to 916 (KRREKERHTK…ADMYGGGEED (160 aa)) lie on the Cytoplasmic side of the membrane. Residues 806–838 (MGHVPSKAPGVRRVDERPVGAEPQYPIRPMVPH) are disordered.

Expressed mainly in brain but also found in other tissues.

It is found in the cell membrane. Cadherins are calcium-dependent cell adhesion proteins. They preferentially interact with themselves in a homophilic manner in connecting cells; cadherins may thus contribute to the sorting of heterogeneous cell types. May play an important role in retinal development. The polypeptide is Cadherin-4 (CDH4) (Homo sapiens (Human)).